Reading from the N-terminus, the 117-residue chain is Antitoxin RelB3 (117 aa).

Its function is as follows. Antitoxin component of a type II toxin-antitoxin (TA) system. Neutralizes the effect of cognate toxin RelE3, but no other RelE or ParE toxin. This is Antitoxin RelB3 (relB3) from Caulobacter vibrioides (strain ATCC 19089 / CIP 103742 / CB 15) (Caulobacter crescentus).